Here is a 437-residue protein sequence, read N- to C-terminus: uncharacterized protein (437 aa).

2 positions are modified to phosphoserine: S290 and S293. T296 is modified (phosphothreonine). 2 positions are modified to phosphoserine: S418 and S428.

This is an uncharacterized protein from Schizosaccharomyces pombe (strain 972 / ATCC 24843) (Fission yeast).